Consider the following 247-residue polypeptide: MTATATEGAKPPFVSRSVLVTGGNRGIGLAIAQRLAADGHKVAVTHRGSGAPKGLFGVECDVTDSDAVDRAFTAVEEHQGPVEVLVSNAGLSADAFLMRMTEEKFEKVINANLTGAFRVAQRASRSMQRNKFGRMIFIGSVSGSWGIGNQANYAASKAGVIGMARSIARELSKANVTANVVAPGYIDTDMTRALDERIQQGALQFIPAKRVGTPAEVAGVVSFLASEDASYISGAVIPVDGGMGMGH.

Residues arginine 25–isoleucine 27, arginine 47, aspartate 61–valine 62, glycine 90, tyrosine 153, lysine 157, isoleucine 186, and arginine 197 each bind NADP(+). The active-site Proton acceptor is the tyrosine 153.

It belongs to the short-chain dehydrogenases/reductases (SDR) family. In terms of assembly, homotetramer.

Its subcellular location is the secreted. The protein localises to the cell wall. The catalysed reaction is a (3R)-hydroxyacyl-[ACP] + NADP(+) = a 3-oxoacyl-[ACP] + NADPH + H(+). It functions in the pathway lipid metabolism; mycolic acid biosynthesis. Its function is as follows. Part of the mycobacterial fatty acid elongation system FAS-II, which is involved in mycolic acid biosynthesis. Catalyzes the NADPH-dependent reduction of beta-ketoacyl derivatives, the second step of the FAS-II elongation cycle. This chain is 3-oxoacyl-[acyl-carrier-protein] reductase MabA, found in Mycobacterium bovis (strain ATCC BAA-935 / AF2122/97).